The primary structure comprises 388 residues: Pepsin A-4 (388 aa).

Positions 1-15 are cleaved as a signal peptide; sequence MKWLLLLGLVALSEC. A propeptide spans 16-62 (activation peptide); that stretch reads IMYKVPLIRKKSLRRTLSERGLLKDFLKKHNLNPARKYFPQWEAPTL. The region spanning 76 to 385 is the Peptidase A1 domain; sequence YFGTIGIGTP…DRANNQVGLA (310 aa). Residue Asp94 is part of the active site. Cysteines 107 and 112 form a disulfide. Position 130 is a phosphoserine (Ser130). Cys268 and Cys272 are oxidised to a cystine. Asp277 is an active-site residue. Cys311 and Cys344 are oxidised to a cystine.

It belongs to the peptidase A1 family.

It localises to the secreted. It catalyses the reaction Preferential cleavage: hydrophobic, preferably aromatic, residues in P1 and P1' positions. Cleaves 1-Phe-|-Val-2, 4-Gln-|-His-5, 13-Glu-|-Ala-14, 14-Ala-|-Leu-15, 15-Leu-|-Tyr-16, 16-Tyr-|-Leu-17, 23-Gly-|-Phe-24, 24-Phe-|-Phe-25 and 25-Phe-|-Tyr-26 bonds in the B chain of insulin.. Shows particularly broad specificity; although bonds involving phenylalanine and leucine are preferred, many others are also cleaved to some extent. The sequence is that of Pepsin A-4 (PGA4) from Homo sapiens (Human).